A 424-amino-acid polypeptide reads, in one-letter code: ATP-sensitive inward rectifier potassium channel 8 (424 aa).

Topologically, residues 1 to 69 (MLARKSIIPE…IFTTLVDLKW (69 aa)) are cytoplasmic. Phosphoserine is present on Ser6. The chain crosses the membrane as a helical span at residues 70–94 (RHTLVIFTMSFLCSWLLFAIMWWLV). Topologically, residues 95–126 (AFAHGDIYAYMEKGTMEKSGLESAVCVTNVRS) are extracellular. Positions 127–138 (FTSAFLFSIEVQ) form an intramembrane region, helical; Pore-forming. The pore-forming intramembrane region spans 139–145 (VTIGFGG). The short motif at 140–145 (TIGFGG) is the Selectivity filter element. The Extracellular segment spans residues 146 to 154 (RMMTEECPL). A helical transmembrane segment spans residues 155–176 (AITVLILQNIVGLIINAVMLGC). Residues 177 to 424 (IFMKTAQAHR…PEGNQCPSES (248 aa)) are Cytoplasmic-facing. The tract at residues 373-409 (ELSHQNSLRKRNSMRRNNSMRRNNSIRRNNSSLMVPK) is disordered. The segment covering 387–404 (RRNNSMRRNNSIRRNNSS) has biased composition (low complexity).

The protein belongs to the inward rectifier-type potassium channel (TC 1.A.2.1) family. KCNJ8 subfamily. In terms of assembly, interacts with ABCC9.

The protein localises to the membrane. The catalysed reaction is K(+)(in) = K(+)(out). Functionally, inward rectifier potassium channels are characterized by a greater tendency to allow potassium to flow into the cell rather than out of it. Their voltage dependence is regulated by the concentration of extracellular potassium; as external potassium is raised, the voltage range of the channel opening shifts to more positive voltages. The inward rectification is mainly due to the blockage of outward current by internal magnesium. This channel is activated by internal ATP and can be blocked by external barium. Can form a sulfonylurea-sensitive but ATP-insensitive potassium channel with ABCC9. This is ATP-sensitive inward rectifier potassium channel 8 (Kcnj8) from Mus musculus (Mouse).